Here is a 1082-residue protein sequence, read N- to C-terminus: CRISPR-associated endonuclease Cas9 (1082 aa).

Asp-16 functions as the For RuvC-like nuclease domain in the catalytic mechanism. Positions 16, 504, and 508 each coordinate Mg(2+). The region spanning 512–667 (SFKDRKEIEK…DEDGFKERNL (156 aa)) is the HNH Cas9-type domain. His-588 acts as the Proton acceptor for HNH nuclease domain in catalysis. Residue His-723 participates in Mg(2+) binding.

This sequence belongs to the CRISPR-associated protein Cas9 family. Subtype II-C subfamily. As to quaternary structure, monomer. Binds crRNA and tracrRNA. Requires Mg(2+) as cofactor.

CRISPR (clustered regularly interspaced short palindromic repeat) is an adaptive immune system that provides protection against mobile genetic elements (viruses, transposable elements and conjugative plasmids). CRISPR clusters contain spacers, sequences complementary to antecedent mobile elements, and target invading nucleic acids. CRISPR clusters are transcribed and processed into CRISPR RNA (crRNA). In type II CRISPR systems correct processing of pre-crRNA requires a trans-encoded small RNA (tracrRNA), endogenous ribonuclease 3 (rnc) and this protein. The tracrRNA serves as a guide for ribonuclease 3-aided processing of pre-crRNA. Subsequently Cas9/crRNA/tracrRNA endonucleolytically cleaves linear or circular dsDNA target complementary to the spacer; Cas9 is inactive in the absence of the 2 guide RNAs (gRNA). Cas9 recognizes the protospacer adjacent motif (PAM) in the CRISPR repeat sequences to help distinguish self versus nonself, as targets within the bacterial CRISPR locus do not have PAMs. PAM recognition is also required for catalytic activity. Cuts target DNA in Cas9:gRNAs mixing experiments with C.jejuni strain NCTC 11168 and P.multocoda strain Pm70. This is CRISPR-associated endonuclease Cas9 from Neisseria meningitidis serogroup A / serotype 4A (strain DSM 15465 / Z2491).